A 128-amino-acid polypeptide reads, in one-letter code: MSNVPTELKYTASHEWVRAEENGVFCVGITDHAQSLLGDMVFVDLPEVGAHIDTGAECAVAESVKAASDIYSPLAGEIVAINGSLEEAPEQVNAAPYDEGWLFRIRADDPAEFAALLSAEGYLAALDE.

One can recognise a Lipoyl-binding domain in the interval 24 to 106 (VFCVGITDHA…YDEGWLFRIR (83 aa)). Residue K65 is modified to N6-lipoyllysine.

Belongs to the GcvH family. As to quaternary structure, the glycine cleavage system is composed of four proteins: P, T, L and H. The cofactor is (R)-lipoate.

Its function is as follows. The glycine cleavage system catalyzes the degradation of glycine. The H protein shuttles the methylamine group of glycine from the P protein to the T protein. In Edwardsiella ictaluri (strain 93-146), this protein is Glycine cleavage system H protein.